The chain runs to 435 residues: Serine--tRNA ligase (435 aa).

238–240 contacts L-serine; sequence TAE. 269 to 271 contacts ATP; sequence RAE. Residue glutamate 292 coordinates L-serine. Residue 356–359 coordinates ATP; that stretch reads EISS. Serine 392 is an L-serine binding site.

Belongs to the class-II aminoacyl-tRNA synthetase family. Type-1 seryl-tRNA synthetase subfamily. Homodimer. The tRNA molecule binds across the dimer.

It is found in the cytoplasm. It carries out the reaction tRNA(Ser) + L-serine + ATP = L-seryl-tRNA(Ser) + AMP + diphosphate + H(+). The catalysed reaction is tRNA(Sec) + L-serine + ATP = L-seryl-tRNA(Sec) + AMP + diphosphate + H(+). The protein operates within aminoacyl-tRNA biosynthesis; selenocysteinyl-tRNA(Sec) biosynthesis; L-seryl-tRNA(Sec) from L-serine and tRNA(Sec): step 1/1. Catalyzes the attachment of serine to tRNA(Ser). Is also able to aminoacylate tRNA(Sec) with serine, to form the misacylated tRNA L-seryl-tRNA(Sec), which will be further converted into selenocysteinyl-tRNA(Sec). This chain is Serine--tRNA ligase, found in Methylobacterium sp. (strain 4-46).